A 401-amino-acid polypeptide reads, in one-letter code: Argininosuccinate synthase (401 aa).

ATP is bound at residue 8–16; the sequence is AYSGGLDTS. Y85 serves as a coordination point for L-citrulline. Position 115 (G115) interacts with ATP. L-aspartate contacts are provided by T117, N121, and D122. N121 contributes to the L-citrulline binding site. Residues R125, S173, E258, and Y270 each coordinate L-citrulline.

This sequence belongs to the argininosuccinate synthase family. Type 1 subfamily. Homotetramer.

It localises to the cytoplasm. The enzyme catalyses L-citrulline + L-aspartate + ATP = 2-(N(omega)-L-arginino)succinate + AMP + diphosphate + H(+). Its pathway is amino-acid biosynthesis; L-arginine biosynthesis; L-arginine from L-ornithine and carbamoyl phosphate: step 2/3. The chain is Argininosuccinate synthase from Staphylococcus aureus (strain bovine RF122 / ET3-1).